Here is a 413-residue protein sequence, read N- to C-terminus: Serine protease inhibitor A3L (413 aa).

Positions 1–28 (MAFIAALGLLMAGICPAVLCDGTLGRDT) are cleaved as a signal peptide. Ser-30 carries the post-translational modification Phosphoserine. Residues Asn-102, Asn-182, Asn-220, and Asn-267 are each glycosylated (N-linked (GlcNAc...) asparagine). Residues 365-389 (GTEATAATGVATVIRRQPRTLNFNR) form an RCL region.

This sequence belongs to the serpin family. N-glycosylated. Liver.

It is found in the secreted. This Rattus norvegicus (Rat) protein is Serine protease inhibitor A3L (Serpina3l).